The following is a 122-amino-acid chain: Large ribosomal subunit protein bL12 (122 aa).

This sequence belongs to the bacterial ribosomal protein bL12 family. Homodimer. Part of the ribosomal stalk of the 50S ribosomal subunit. Forms a multimeric L10(L12)X complex, where L10 forms an elongated spine to which 2 to 4 L12 dimers bind in a sequential fashion. Binds GTP-bound translation factors.

In terms of biological role, forms part of the ribosomal stalk which helps the ribosome interact with GTP-bound translation factors. Is thus essential for accurate translation. The protein is Large ribosomal subunit protein bL12 of Buchnera aphidicola subsp. Acyrthosiphon pisum (strain Tuc7).